A 100-amino-acid chain; its full sequence is MELTPREKDKLLLFTAALLAERRLARGLKLNYPEAVALISAAVLEGARDGRTVAELMSLGREVIGREQVMDGVPEMLHDVQVEATFPDGTKLVTVHDPIV.

The protein belongs to the urease gamma subunit family. Heterotrimer of UreA (gamma), UreB (beta) and UreC (alpha) subunits. Three heterotrimers associate to form the active enzyme.

The protein localises to the cytoplasm. The enzyme catalyses urea + 2 H2O + H(+) = hydrogencarbonate + 2 NH4(+). Its pathway is nitrogen metabolism; urea degradation; CO(2) and NH(3) from urea (urease route): step 1/1. The polypeptide is Urease subunit gamma (Pseudomonas putida (strain W619)).